We begin with the raw amino-acid sequence, 228 residues long: MFRKLSVEFLGTFWLVLGGCGSAVLAAAFPEVGIGLLGVSFAFGLTVLTMAYAVGGISGGHFNPAVSVGLAVAGRMPPASLVGYILAQVTGAIAAAAVLYVIASGKADFQLGGFAANGYGEHSPGGYSLTAALVTEVVMTAFFLLIILGSTHSRVPVGFAPIAIGLGLTLIHLVSIPVTNTSVNPARSTGQALFVGDWAISQLWLFWVAPLIGAVIAGIVWKIVGDDS.

2 helical membrane passes run 9–29 and 34–54; these read FLGT…AAAF and IGLL…AYAV. The NPA 1 signature appears at 63–65; it reads NPA. 3 consecutive transmembrane segments (helical) span residues 82–102, 129–149, and 156–176; these read VGYI…LYVI, LTAA…IILG, and PVGF…LVSI. Positions 184–186 match the NPA 2 motif; it reads NPA. A helical transmembrane segment spans residues 204 to 224; the sequence is WLFWVAPLIGAVIAGIVWKIV.

It belongs to the MIP/aquaporin (TC 1.A.8) family. In terms of assembly, homotetramer.

The protein localises to the cell inner membrane. It carries out the reaction H2O(in) = H2O(out). Its function is as follows. Channel that permits osmotically driven movement of water in both directions. It is involved in the osmoregulation and in the maintenance of cell turgor during volume expansion in rapidly growing cells. It mediates rapid entry or exit of water in response to abrupt changes in osmolarity. The chain is Aquaporin Z 1 from Rhizobium meliloti (strain 1021) (Ensifer meliloti).